A 612-amino-acid chain; its full sequence is Elongation factor 4 (612 aa).

Positions Ser-12–Ala-194 constitute a tr-type G domain. Residues Asp-24–Thr-29 and Asn-141–Asp-144 contribute to the GTP site.

The protein belongs to the TRAFAC class translation factor GTPase superfamily. Classic translation factor GTPase family. LepA subfamily.

Its subcellular location is the cell membrane. The catalysed reaction is GTP + H2O = GDP + phosphate + H(+). Functionally, required for accurate and efficient protein synthesis under certain stress conditions. May act as a fidelity factor of the translation reaction, by catalyzing a one-codon backward translocation of tRNAs on improperly translocated ribosomes. Back-translocation proceeds from a post-translocation (POST) complex to a pre-translocation (PRE) complex, thus giving elongation factor G a second chance to translocate the tRNAs correctly. Binds to ribosomes in a GTP-dependent manner. The chain is Elongation factor 4 from Bacillus pumilus (strain SAFR-032).